Consider the following 348-residue polypeptide: Guanosine ABC transporter permease protein NupP (348 aa).

The next 9 membrane-spanning stretches (helical) occupy residues Leu-8 to Val-28, Tyr-61 to Val-81, Leu-85 to Ile-105, Leu-107 to Ile-127, Glu-136 to Ser-156, Leu-189 to Lys-209, Ile-237 to Leu-257, Ile-277 to Leu-297, and Ile-320 to Gly-340.

The protein belongs to the binding-protein-dependent transport system permease family. In terms of assembly, the complex is composed of two ATP-binding proteins (NupO), two transmembrane proteins (NupP and NupQ) and a solute-binding protein (NupN).

Its subcellular location is the cell membrane. Functionally, part of an ABC transporter complex involved in the uptake of guanosine. Responsible for the translocation of the substrate across the membrane. May be a nucleoside transporter of broad specificity but with various affinities for different substrates. In Bacillus subtilis (strain 168), this protein is Guanosine ABC transporter permease protein NupP.